Consider the following 453-residue polypeptide: Ribulose bisphosphate carboxylase large chain (453 aa).

Residues 1–2 constitute a propeptide that is removed on maturation; the sequence is MS. At P3 the chain carries N-acetylproline. K14 bears the N6,N6,N6-trimethyllysine mark. Substrate contacts are provided by N123 and T173. K175 (proton acceptor) is an active-site residue. A substrate-binding site is contributed by K177. Mg(2+)-binding residues include K201, D203, and E204. K201 carries the post-translational modification N6-carboxylysine. The Proton acceptor role is filled by H294. The substrate site is built by R295, H327, and S379.

This sequence belongs to the RuBisCO large chain family. Type I subfamily. As to quaternary structure, heterohexadecamer of 8 large chains and 8 small chains; disulfide-linked. The disulfide link is formed within the large subunit homodimers. The cofactor is Mg(2+). In terms of processing, the disulfide bond which can form in the large chain dimeric partners within the hexadecamer appears to be associated with oxidative stress and protein turnover.

The protein localises to the plastid. It localises to the chloroplast. It catalyses the reaction 2 (2R)-3-phosphoglycerate + 2 H(+) = D-ribulose 1,5-bisphosphate + CO2 + H2O. It carries out the reaction D-ribulose 1,5-bisphosphate + O2 = 2-phosphoglycolate + (2R)-3-phosphoglycerate + 2 H(+). In terms of biological role, ruBisCO catalyzes two reactions: the carboxylation of D-ribulose 1,5-bisphosphate, the primary event in carbon dioxide fixation, as well as the oxidative fragmentation of the pentose substrate in the photorespiration process. Both reactions occur simultaneously and in competition at the same active site. This Rubia tinctorum (Madder) protein is Ribulose bisphosphate carboxylase large chain.